We begin with the raw amino-acid sequence, 133 residues long: S-protein homolog 21 (133 aa).

The N-terminal stretch at Met-1 to Gly-21 is a signal peptide.

It belongs to the plant self-incompatibility (S1) protein family.

It localises to the secreted. This chain is S-protein homolog 21, found in Arabidopsis thaliana (Mouse-ear cress).